Reading from the N-terminus, the 230-residue chain is Large ribosomal subunit protein uL1 (230 aa).

This sequence belongs to the universal ribosomal protein uL1 family. As to quaternary structure, part of the 50S ribosomal subunit.

In terms of biological role, binds directly to 23S rRNA. The L1 stalk is quite mobile in the ribosome, and is involved in E site tRNA release. Its function is as follows. Protein L1 is also a translational repressor protein, it controls the translation of the L11 operon by binding to its mRNA. The chain is Large ribosomal subunit protein uL1 from Bradyrhizobium sp. (strain BTAi1 / ATCC BAA-1182).